The chain runs to 215 residues: Large ribosomal subunit protein uL3 (215 aa).

The disordered stretch occupies residues 136 to 155; it reads GVSISHRSHGSTGQRQDPGK. Glutamine 151 is subject to N5-methylglutamine.

This sequence belongs to the universal ribosomal protein uL3 family. Part of the 50S ribosomal subunit. Forms a cluster with proteins L14 and L19. Methylated by PrmB.

One of the primary rRNA binding proteins, it binds directly near the 3'-end of the 23S rRNA, where it nucleates assembly of the 50S subunit. The polypeptide is Large ribosomal subunit protein uL3 (Rickettsia conorii (strain ATCC VR-613 / Malish 7)).